The chain runs to 364 residues: Phospho-N-acetylmuramoyl-pentapeptide-transferase (364 aa).

A run of 10 helical transmembrane segments spans residues 18–38, 48–68, 91–111, 114–134, 154–174, 183–203, 214–234, 237–257, 280–300, and 343–363; these read SLLI…AQIL, LFPL…VVPV, GTPT…ALIW, LDPA…IGWI, LILQ…TQSA, GQII…VLVA, VDGL…ALMA, NPGL…FIVH, AIGI…IFFV, and TQIV…AVIS.

Belongs to the glycosyltransferase 4 family. MraY subfamily. The cofactor is Mg(2+).

Its subcellular location is the cell inner membrane. The catalysed reaction is UDP-N-acetyl-alpha-D-muramoyl-L-alanyl-gamma-D-glutamyl-meso-2,6-diaminopimeloyl-D-alanyl-D-alanine + di-trans,octa-cis-undecaprenyl phosphate = di-trans,octa-cis-undecaprenyl diphospho-N-acetyl-alpha-D-muramoyl-L-alanyl-D-glutamyl-meso-2,6-diaminopimeloyl-D-alanyl-D-alanine + UMP. It functions in the pathway cell wall biogenesis; peptidoglycan biosynthesis. In terms of biological role, catalyzes the initial step of the lipid cycle reactions in the biosynthesis of the cell wall peptidoglycan: transfers peptidoglycan precursor phospho-MurNAc-pentapeptide from UDP-MurNAc-pentapeptide onto the lipid carrier undecaprenyl phosphate, yielding undecaprenyl-pyrophosphoryl-MurNAc-pentapeptide, known as lipid I. In Rippkaea orientalis (strain PCC 8801 / RF-1) (Cyanothece sp. (strain PCC 8801)), this protein is Phospho-N-acetylmuramoyl-pentapeptide-transferase.